We begin with the raw amino-acid sequence, 205 residues long: Arginine exporter protein ArgO (205 aa).

A run of 6 helical transmembrane segments spans residues 1-21 (MLAV…PLGP), 42-62 (LCAL…SALL), 67-87 (LLLA…GWGA), 111-131 (ILVT…DTFV), 147-167 (WFAL…AFLA), and 185-205 (LFVG…GFGL).

The protein belongs to the LysE/ArgO transporter (TC 2.A.75) family.

The protein localises to the cell inner membrane. It catalyses the reaction L-arginine(in) = L-arginine(out). Its function is as follows. Involved in the export of arginine. Important to control the intracellular level of arginine and the correct balance between arginine and lysine. The chain is Arginine exporter protein ArgO from Yersinia pseudotuberculosis serotype O:3 (strain YPIII).